The chain runs to 169 residues: Cytochrome c oxidase subunit 4 isoform 1, mitochondrial (169 aa).

Residues 1–22 (MLATRVFSLIGRRAISTSVCVR) constitute a mitochondrion transit peptide. Topologically, residues 23 to 98 (AHGSVVKSED…SFAEMNRSTN (76 aa)) are mitochondrial matrix. The residue at position 29 (lysine 29) is an N6-acetyllysine; alternate. Position 29 is an N6-succinyllysine; alternate (lysine 29). Lysine 53 carries the post-translational modification N6-acetyllysine. Phosphoserine is present on residues serine 56 and serine 58. An N6-acetyllysine; alternate modification is found at lysine 60. Position 60 is an N6-succinyllysine; alternate (lysine 60). Lysine 67 is subject to N6-acetyllysine. A helical membrane pass occupies residues 99-124 (EWKTVVGAAMFFIGFTALLLIWEKHY). Residues 125–169 (VYGPIPHTFEEEWVAKQTKRMLDMKVAPIQGFSAKWDYDKNEWKK) are Mitochondrial intermembrane-facing.

It belongs to the cytochrome c oxidase IV family. In terms of assembly, component of the cytochrome c oxidase (complex IV, CIV), a multisubunit enzyme composed of 14 subunits. The complex is composed of a catalytic core of 3 subunits MT-CO1, MT-CO2 and MT-CO3, encoded in the mitochondrial DNA, and 11 supernumerary subunits COX4I1 (or COX4I2), COX5A, COX5B, COX6A2 (or COX6A1), COX6B1 (or COX6B2), COX6C, COX7A1 (or COX7A2), COX7B, COX7C, COX8B and NDUFA4, which are encoded in the nuclear genome. The complex exists as a monomer or a dimer and forms supercomplexes (SCs) in the inner mitochondrial membrane with NADH-ubiquinone oxidoreductase (complex I, CI) and ubiquinol-cytochrome c oxidoreductase (cytochrome b-c1 complex, complex III, CIII), resulting in different assemblies (supercomplex SCI(1)III(2)IV(1) and megacomplex MCI(2)III(2)IV(2)). Interacts with PHB2; the interaction decreases in absence of SPHK2. Interacts with AFG1L. Interacts with ABCB7; this interaction allows the regulation of cellular iron homeostasis and cellular reactive oxygen species (ROS) levels in cardiomyocytes. Interacts with FLVCR2; this interaction occurs in the absence of heme and is disrupted upon heme binding. Interacts with IRGC.

The protein localises to the mitochondrion inner membrane. The protein operates within energy metabolism; oxidative phosphorylation. Its function is as follows. Component of the cytochrome c oxidase, the last enzyme in the mitochondrial electron transport chain which drives oxidative phosphorylation. The respiratory chain contains 3 multisubunit complexes succinate dehydrogenase (complex II, CII), ubiquinol-cytochrome c oxidoreductase (cytochrome b-c1 complex, complex III, CIII) and cytochrome c oxidase (complex IV, CIV), that cooperate to transfer electrons derived from NADH and succinate to molecular oxygen, creating an electrochemical gradient over the inner membrane that drives transmembrane transport and the ATP synthase. Cytochrome c oxidase is the component of the respiratory chain that catalyzes the reduction of oxygen to water. Electrons originating from reduced cytochrome c in the intermembrane space (IMS) are transferred via the dinuclear copper A center (CU(A)) of subunit 2 and heme A of subunit 1 to the active site in subunit 1, a binuclear center (BNC) formed by heme A3 and copper B (CU(B)). The BNC reduces molecular oxygen to 2 water molecules using 4 electrons from cytochrome c in the IMS and 4 protons from the mitochondrial matrix. This chain is Cytochrome c oxidase subunit 4 isoform 1, mitochondrial (COX4I1), found in Bos taurus (Bovine).